We begin with the raw amino-acid sequence, 85 residues long: Toxin TdNa9 (85 aa).

Residues 1-21 (MLKFAIAVALLLFIGLELREA) form the signal peptide. The LCN-type CS-alpha/beta domain maps to 22 to 84 (RDGYPQSKVN…YGDPGTKPCM (63 aa)). Intrachain disulfides connect Cys-33–Cys-83, Cys-37–Cys-58, Cys-43–Cys-63, and Cys-47–Cys-65.

This sequence belongs to the long (4 C-C) scorpion toxin superfamily. Sodium channel inhibitor family. Beta subfamily. In terms of tissue distribution, expressed by the venom gland.

It is found in the secreted. In terms of biological role, alpha toxins bind voltage-independently at site-3 of sodium channels (Nav) and inhibit the inactivation of the activated channels, thereby blocking neuronal transmission. This toxin binds, in vitro, to sodium channels and inhibits the inactivation of the activated channels. Seems not toxic to mice, crickets and sweet-water shrimps. This Tityus discrepans (Venezuelan scorpion) protein is Toxin TdNa9.